A 592-amino-acid chain; its full sequence is A-type ATP synthase subunit A (592 aa).

233–240 (GPFGSGKT) contributes to the ATP binding site.

The protein belongs to the ATPase alpha/beta chains family. As to quaternary structure, has multiple subunits with at least A(3), B(3), C, D, E, F, H, I and proteolipid K(x).

It is found in the cell membrane. The catalysed reaction is ATP + H2O + 4 H(+)(in) = ADP + phosphate + 5 H(+)(out). Component of the A-type ATP synthase that produces ATP from ADP in the presence of a proton gradient across the membrane. The A chain is the catalytic subunit. The protein is A-type ATP synthase subunit A of Saccharolobus islandicus (strain M.16.27) (Sulfolobus islandicus).